We begin with the raw amino-acid sequence, 126 residues long: Nitrogenase-stabilizing/protective protein NifW (126 aa).

A disordered region spans residues 104 to 126 (VPMSEITVERPATTQTDEKGQQR).

It belongs to the NifW family. In terms of assembly, homotrimer; associates with NifD.

Functionally, may protect the nitrogenase Fe-Mo protein from oxidative damage. This Parafrankia sp. (strain EAN1pec) protein is Nitrogenase-stabilizing/protective protein NifW.